Reading from the N-terminus, the 859-residue chain is Cation/H(+) antiporter 24 (859 aa).

12 helical membrane-spanning segments follow: residues 64–84, 92–112, 122–142, 161–181, 194–214, 227–247, 258–278, 291–311, 312–332, 348–368, 384–404, and 438–458; these read AFST…VVSI, PRIV…FGGI, PIAN…FLFL, YIAA…GMAM, SIGG…YTVL, FAMS…VIFE, YSVF…LLVV, EGTL…LASC, FLTD…GLLV, TFIY…GTNI, FYMT…AALF, and IVGF…TAVT. The segment at 538-566 is disordered; sequence IDHEQRKEEEEEEYEEEEEEPERKQSGRI. Positions 546–557 are enriched in acidic residues; the sequence is EEEEEYEEEEEE. S857 is subject to Phosphoserine.

This sequence belongs to the monovalent cation:proton antiporter 2 (CPA2) transporter (TC 2.A.37) family. CHX (TC 2.A.37.4) subfamily. As to expression, specifically expressed in pollen.

It localises to the membrane. Its function is as follows. May operate as a cation/H(+) antiporter. This Arabidopsis thaliana (Mouse-ear cress) protein is Cation/H(+) antiporter 24 (CHX24).